The following is a 410-amino-acid chain: Peptidase T (410 aa).

His-78 serves as a coordination point for Zn(2+). Residue Asp-80 is part of the active site. Zn(2+) is bound at residue Asp-140. The active-site Proton acceptor is the Glu-173. Zn(2+) contacts are provided by Glu-174, Asp-196, and His-379.

The protein belongs to the peptidase M20B family. Requires Zn(2+) as cofactor.

The protein resides in the cytoplasm. The enzyme catalyses Release of the N-terminal residue from a tripeptide.. Functionally, cleaves the N-terminal amino acid of tripeptides. This is Peptidase T from Pectobacterium carotovorum subsp. carotovorum (strain PC1).